Consider the following 489-residue polypeptide: Aklavinone 12-hydroxylase DnrF (489 aa).

Residues L17 to G18, E37, Q121, and L145 contribute to the FAD site. Catalysis depends on Y224, which acts as the Proton acceptor. D308 serves as a coordination point for FAD. Residue G317 coordinates aklavinone. Residues V402–H428 form a disordered region.

It belongs to the PheA/TfdB FAD monooxygenase family. Monomer. The cofactor is FAD.

The enzyme catalyses aklavinone + NADPH + O2 + H(+) = epsilon-rhodomycinone + NADP(+) + H2O. It participates in antibiotic biosynthesis; daunorubicin biosynthesis. It functions in the pathway antibiotic biosynthesis; carminomycin biosynthesis. The protein operates within antibiotic biosynthesis; rhodomycin biosynthesis. Its pathway is antibiotic biosynthesis; doxorubicin biosynthesis. Functionally, involved in the biosynthesis of the anthracyclines carminomycin, rhodomycin, daunorubicin (daunomycin) and doxorubicin (adriamycin) which are aromatic polyketide antibiotics that exhibit high cytotoxicity and are widely applied in the chemotherapy of a variety of cancers. Catalyzes the incorporation of a hydroxyl group at position C-11 of aklavinone, resulting in epsilon-rhodomycinone. The chain is Aklavinone 12-hydroxylase DnrF (dnrF) from Streptomyces peucetius subsp. caesius.